The following is a 668-amino-acid chain: Bestrophin-3 (668 aa).

Residues 1 to 31 (MTVTYSSKVANATFFGFHRLLLKWRGSIYKL) lie on the Cytoplasmic side of the membrane. A10 is a Ca(2+) binding site. The helical transmembrane segment at 32–51 (LYREFIVFAVLYTAISLVYR) threads the bilayer. Residues 52 to 60 (LLLTGVQKR) lie on the Extracellular side of the membrane. The helical transmembrane segment at 61–82 (YFEKLSIYCDRYAEQIPVTFVL) threads the bilayer. The Cytoplasmic portion of the chain corresponds to 83–237 (GFYVTLVVNR…DWVGIPLVYT (155 aa)). The chain crosses the membrane as a helical span at residues 238 to 255 (QVVTLAVYTFFFACLIGR). The Extracellular segment spans residues 256 to 274 (QFLDPTKGYAGHDLDLYIP). A helical transmembrane segment spans residues 275–288 (IFTLLQFFFYAGWL). Residues 289–668 (KVAEQLINPF…LNKETEESPK (380 aa)) are Cytoplasmic-facing. Ca(2+)-binding residues include Q293, N296, D301, and D304. Disordered stretches follow at residues 400–454 (SAHE…KKSC), 473–493 (RETS…VRTS), and 532–570 (TGVQ…VSAS). Residues 425–436 (PRDDLSPARDLL) show a composition bias toward basic and acidic residues. The segment covering 475–489 (TSQTSTLQSLTPQSS) has biased composition (low complexity). Residues 532–545 (TGVQPSKTEQQQGP) are compositionally biased toward polar residues.

It belongs to the anion channel-forming bestrophin (TC 1.A.46) family. Calcium-sensitive chloride channel subfamily. In terms of tissue distribution, present in skeletal muscle and weakly in brain, spinal cord, bone marrow and retina.

It is found in the cell membrane. It carries out the reaction chloride(in) = chloride(out). Ligand-gated anion channel that allows the movement of chloride monoatomic anions across cell membranes when activated by calcium (Ca2+). The sequence is that of Bestrophin-3 from Homo sapiens (Human).